A 207-amino-acid chain; its full sequence is Minor capsid protein P11 (207 aa).

Residues 7–23 are hydrophobic; the sequence is VKVVAILAVLFLVYKLW. The interval 63–82 is disordered; it reads ETDAEDDDIYTGETDDMYDG.

In terms of assembly, interacts with the major capsid protein.

The protein localises to the virion. Its function is as follows. One of the minor capsid proteins that constitute a network internal to the major capsid proteins and outside the lipid membrane. The minor capsid proteins glue and stabilize the capsomers. the p11 zip protein binds together the neighboring symmetrons. The protein is Minor capsid protein P11 of Paramecium bursaria Chlorella virus 1 (PBCV-1).